Here is a 296-residue protein sequence, read N- to C-terminus: Protoheme IX farnesyltransferase (296 aa).

The next 9 helical transmembrane spans lie at 9–29 (VTKP…FLLA), 36–56 (YPLF…GCVF), 84–104 (AVSL…LWFG), 108–128 (LACW…SLYM), 133–153 (VYGT…GYCA), 163–183 (LILL…IAIF), 209–229 (ITLY…GGYA), 234–254 (LVVA…GYKV), and 265–285 (FGFS…DFMV).

This sequence belongs to the UbiA prenyltransferase family. Protoheme IX farnesyltransferase subfamily.

It is found in the cell inner membrane. The enzyme catalyses heme b + (2E,6E)-farnesyl diphosphate + H2O = Fe(II)-heme o + diphosphate. The protein operates within porphyrin-containing compound metabolism; heme O biosynthesis; heme O from protoheme: step 1/1. Functionally, converts heme B (protoheme IX) to heme O by substitution of the vinyl group on carbon 2 of heme B porphyrin ring with a hydroxyethyl farnesyl side group. The polypeptide is Protoheme IX farnesyltransferase (Citrobacter koseri (strain ATCC BAA-895 / CDC 4225-83 / SGSC4696)).